The chain runs to 676 residues: Potassium voltage-gated channel subfamily KQT member 1 (676 aa).

2 disordered regions span residues 1–28 (MAAASSPPRAERKRWGWGRLPGARRGSA) and 62–84 (APPASPAAPAAPPVASDLGPRPP). Over 1 to 120 (MAAASSPPRA…YNFLERPTGW (120 aa)) the chain is Cytoplasmic. Phosphoserine; by PKA is present on Ser-27. Over residues 62-73 (APPASPAAPAAP) the composition is skewed to pro residues. A helical membrane pass occupies residues 121–142 (KCFVYHFAVFLIVLVCLIFSVL). The Extracellular segment spans residues 143 to 153 (STIEQYAALAT). A helical membrane pass occupies residues 154-176 (GTLFWMEIVLVVFFGTEYVVRLW). Topologically, residues 177–192 (SAGCRSKYVGLWGRLR) are cytoplasmic. The helical transmembrane segment at 193 to 218 (FARKPISIIDLIVVVASMVVLCVGSK) threads the bilayer. The Extracellular segment spans residues 219-226 (GQVFATSA). The chain crosses the membrane as a helical; Voltage-sensor span at residues 227–242 (IRGIRFLQILRMLHVD). Residues 238–246 (MLHVDRQGG) form an interaction with KCNE3 region. Over 243-260 (RQGGTWRLLGSVVFIHRQ) the chain is Cytoplasmic. Gln-244 lines the a 1,2-diacyl-sn-glycero-3-phospho-(1D-myo-inositol-4,5-bisphosphate) pocket. The chain crosses the membrane as a helical span at residues 261 to 283 (ELITTLYIGFLGLIFSSYFVYLA). Over 284-299 (EKDAVNESGRVEFGSY) the chain is Extracellular. Asn-289 carries an N-linked (GlcNAc...) asparagine glycan. Positions 300-320 (ADALWWGVVTVTTIGYGDKVP) form an intramembrane region, pore-forming. At 321 to 322 (QT) the chain is on the extracellular side. A helical membrane pass occupies residues 323–348 (WVGKTIASCFSVFAISFFALPAGILG). The Cytoplasmic portion of the chain corresponds to 349 to 676 (SGFALKVQQK…VPRRGPDEGS (328 aa)). The tract at residues 370–382 (AAASLIQTAWRCY) is interaction with CALM. Residues Ser-407 and Ser-409 each carry the phosphoserine modification. An interaction with CALM; calcium-dependent region spans residues 515–529 (KVIRRMQYFVAKKKF). Residues 535-572 (PYDVRDVIEQYSQGHLNLMVRIKELQRRLDQSIGKPSL) form an interaction with KCNE1 C-terminus region. The stretch at 585 to 621 (SNTIGARLNRVEDKVTQLDQRLALITDMLHQLLSLHG) forms a coiled coil. Residues 588–616 (IGARLNRVEDKVTQLDQRLALITDMLHQL) form an interaction with AKAP9 region. The tract at residues 589–620 (GARLNRVEDKVTQLDQRLALITDMLHQLLSLH) is C-terminal assembly domain (tetramerization). The disordered stretch occupies residues 620–676 (HGGSTPGSGGPPREGGAHITQPCGSGGSVDPELFLPSNTLPTYEQLTVPRRGPDEGS). A compositionally biased stretch (gly residues) spans 623–632 (STPGSGGPPR). A compositionally biased stretch (polar residues) spans 655–664 (PSNTLPTYEQ).

Belongs to the potassium channel family. KQT (TC 1.A.1.15) subfamily. Kv7.1/KCNQ1 sub-subfamily. As to quaternary structure, tetramer. Heterotetramer with KCNE1; targets to the membrane raft. Interacts (via C-terminus) with calmodulin; forms a heterooctameric structure (with 4:4 KCNQ1:CALM stoichiometry); the interaction is calcium-independent, constitutive, participates in the proper assembly of a functional channel and also acts a calcium sensor. KCNQ1 channels interact more strongly with Ca(2+)-CALM than with apoCALM. Interacts with AKAP9; targets protein kinase A (PKA) catalytic and regulatory subunits and protein phosphatase 1 (PP1) to the KCNQ1-KCNE1 complex, allowing PKA-mediated phosphorylation and increase of delayed rectifier potassium channel activity. Interacts with KCNE2; forms a heterooligomer complex that targets to the membrane raft and leading to currents with an apparently instantaneous activation, a rapid deactivation process and a linear current-voltage relationship and decreases the amplitude of the outward current. Interacts with AP2M1; mediates estrogen-induced internalization via clathrin-coated vesicles. Interacts with NEDD4L; promotes internalization and decreases I(Ks) currents. Interacts with USP2; counteracts the NEDD4L-specific down-regulation of I(Ks) and restore plasma membrane localization. Heterotetramer with KCNQ5; has a voltage-gated potassium channel activity. Interacts with KCNE3; four KCNE3 molecules are bound to one KCNQ1 tetramer (4:4 KCNQ1:KCNE3 stoichiometry); alters membrane raft localization; affects KCNQ1 structure and gating properties. Interacts with KCNE4; impairs KCNQ1 localization in lipid rafts and inhibits voltage-gated potassium channel activity. Interacts with KCNE5; impairs KCNQ1 localization in lipid rafts and only conducts current upon strong and continued depolarization. Interacts with SLC5A3; forms coregulatory channel-transporter complexes that modulate Na(+)-coupled myo-inositol influx through the transporter. Post-translationally, phosphorylation at Ser-27 by PKA; increases delayed rectifier potassium channel activity of the KCNQ1-KCNE1 complex through a macromolecular complex that includes PKA, PP1, and the targeting protein AKAP9. Ubiquitinated by NEDD4L; promotes internalization. The ubiquitinylated form is internalized through a clathrin-mediated endocytosis by interacting with AP2M1 and is recycled back to the cell membrane via RAB4A and RAB11A. In terms of processing, deubiquitinated by USP2; counteracts the NEDD4L-specific down-regulation of I(Ks) and restores the membrane localization. In terms of tissue distribution, abundantly expressed in heart, pancreas, prostate, kidney, small intestine and peripheral blood leukocytes. Less abundant in placenta, lung, spleen, colon, thymus, testis and ovaries.

It is found in the cell membrane. It localises to the cytoplasmic vesicle membrane. The protein resides in the early endosome. Its subcellular location is the membrane raft. The protein localises to the endoplasmic reticulum. It is found in the basolateral cell membrane. It localises to the apical cell membrane. The enzyme catalyses K(+)(in) = K(+)(out). With respect to regulation, PIP2 molecule is essential to activate KCNQ channels by inducing the coupling of the voltage-sensing domain (VSD) and the pore-forming domain (PD). Upon channel activation, PIP2 disrupts the VSD-calmodulin/CALM interactions, causing the release of CALM from the VSD which triggers the opening of the gate. Calcium potentiates KCNQ1 channel current through calcium-bound CALM. Calcium-bound CALM competes with PIP2 to stabilize the channel open state. In terms of biological role, pore-forming subunit of the voltage-gated potassium (Kv) channel involved in the regulation of cardiomyocyte excitability and important in normal development and functions of myocardium, inner ear, stomach and colon. Associates with KCNE beta subunits that modulates current kinetics. Induces a voltage-dependent current by rapidly activating and slowly deactivating potassium-selective outward current. Also promotes a delayed voltage activated potassium current showing outward rectification characteristic. During beta-adrenergic receptor stimulation, participates in cardiac repolarization by associating with KCNE1 to form the I(Ks) cardiac potassium current that increases the amplitude and slows down the activation kinetics of outward potassium current I(Ks). Muscarinic agonist oxotremorine-M strongly suppresses KCNQ1/KCNE1 current. When associated with KCNE3, forms the potassium channel that is important for cyclic AMP-stimulated intestinal secretion of chloride ions. This interaction with KCNE3 is reduced by 17beta-estradiol, resulting in the reduction of currents. During conditions of increased substrate load, maintains the driving force for proximal tubular and intestinal sodium ions absorption, gastric acid secretion, and cAMP-induced jejunal chloride ions secretion. Allows the provision of potassium ions to the luminal membrane of the secretory canaliculus in the resting state as well as during stimulated acid secretion. When associated with KCNE2, forms a heterooligomer complex leading to currents with an apparently instantaneous activation, a rapid deactivation process and a linear current-voltage relationship and decreases the amplitude of the outward current. When associated with KCNE4, inhibits voltage-gated potassium channel activity. When associated with KCNE5, this complex only conducts current upon strong and continued depolarization. Also forms a heterotetramer with KCNQ5; has a voltage-gated potassium channel activity. Binds with phosphatidylinositol 4,5-bisphosphate. KCNQ1-KCNE2 channel associates with Na(+)-coupled myo-inositol symporter in the apical membrane of choroid plexus epithelium and regulates the myo-inositol gradient between blood and cerebrospinal fluid with an impact on neuron excitability. Functionally, non-functional alone but modulatory when coexpressed with the full-length isoform 1. The polypeptide is Potassium voltage-gated channel subfamily KQT member 1 (Homo sapiens (Human)).